Here is a 274-residue protein sequence, read N- to C-terminus: Lipoprotein E (274 aa).

The signal sequence occupies residues 1–20; that stretch reads MKTTLKMTALAALSAFVLAG. Cys21 is lipidated: N-palmitoyl cysteine. Cys21 carries S-diacylglycerol cysteine lipidation.

The protein resides in the cell outer membrane. The chain is Lipoprotein E (hel) from Haemophilus influenzae (strain ATCC 51907 / DSM 11121 / KW20 / Rd).